A 571-amino-acid polypeptide reads, in one-letter code: Potassium-transporting ATPase potassium-binding subunit (571 aa).

A run of 11 helical transmembrane segments spans residues 3 to 23, 64 to 84, 135 to 155, 179 to 199, 254 to 274, 284 to 304, 330 to 350, 357 to 376, 421 to 441, 488 to 508, and 527 to 547; these read LIGW…VKPL, LGYG…LYAI, LGLT…AVAL, LYVL…QGMP, LANL…TNVF, GWAI…VTYA, FGIV…CGAV, FTAL…EIIV, MLAI…ATVL, LALG…AIAG, and GGLF…LTFF.

The protein belongs to the KdpA family. The system is composed of three essential subunits: KdpA, KdpB and KdpC.

It localises to the cell inner membrane. Part of the high-affinity ATP-driven potassium transport (or Kdp) system, which catalyzes the hydrolysis of ATP coupled with the electrogenic transport of potassium into the cytoplasm. This subunit binds the periplasmic potassium ions and delivers the ions to the membrane domain of KdpB through an intramembrane tunnel. The chain is Potassium-transporting ATPase potassium-binding subunit from Methylorubrum populi (strain ATCC BAA-705 / NCIMB 13946 / BJ001) (Methylobacterium populi).